We begin with the raw amino-acid sequence, 172 residues long: MSAQVSLELHLRISQFLFHEASLLDDWKFRDWLAQLDEEIRYTMRTTVNAQTRDRRKGVQPPTTWIFNDTKDQLERRIARLETGMAWAEEPPSRTRHLISNCQISETDIPNVFAVRVNYLLYQAQKERDETFYVGTRFDKVRRLEDDNWRLLERDIVLDQAVITSHNLSVLF.

It belongs to the bacterial ring-hydroxylating dioxygenase beta subunit family. In terms of assembly, this dioxygenase system consists of four proteins: the two subunits of the hydroxylase component (HcaE and HcaF), a ferredoxin (HcaC) and a ferredoxin reductase (HcaD).

It catalyses the reaction 3-phenylpropanoate + NADH + O2 + H(+) = 3-(cis-5,6-dihydroxycyclohexa-1,3-dien-1-yl)propanoate + NAD(+). The catalysed reaction is (E)-cinnamate + NADH + O2 + H(+) = (2E)-3-(cis-5,6-dihydroxycyclohexa-1,3-dien-1-yl)prop-2-enoate + NAD(+). Its pathway is aromatic compound metabolism; 3-phenylpropanoate degradation. Functionally, part of the multicomponent 3-phenylpropionate dioxygenase. Converts 3-phenylpropionic acid (PP) and cinnamic acid (CI) into 3-phenylpropionate-dihydrodiol (PP-dihydrodiol) and cinnamic acid-dihydrodiol (CI-dihydrodiol), respectively. This chain is 3-phenylpropionate/cinnamic acid dioxygenase subunit beta, found in Shigella boydii serotype 4 (strain Sb227).